The primary structure comprises 324 residues: Beta-ketoacyl-[acyl-carrier-protein] synthase III (324 aa).

Catalysis depends on residues cysteine 112 and histidine 249. Positions 250-254 (QANDR) are ACP-binding. The active site involves asparagine 279.

Belongs to the thiolase-like superfamily. FabH family. Homodimer.

It localises to the cytoplasm. It catalyses the reaction malonyl-[ACP] + acetyl-CoA + H(+) = 3-oxobutanoyl-[ACP] + CO2 + CoA. The protein operates within lipid metabolism; fatty acid biosynthesis. Catalyzes the condensation reaction of fatty acid synthesis by the addition to an acyl acceptor of two carbons from malonyl-ACP. Catalyzes the first condensation reaction which initiates fatty acid synthesis and may therefore play a role in governing the total rate of fatty acid production. Possesses both acetoacetyl-ACP synthase and acetyl transacylase activities. Its substrate specificity determines the biosynthesis of branched-chain and/or straight-chain of fatty acids. This is Beta-ketoacyl-[acyl-carrier-protein] synthase III from Streptococcus pneumoniae serotype 2 (strain D39 / NCTC 7466).